Here is a 73-residue protein sequence, read N- to C-terminus: Conotoxin Bt11.1 (73 aa).

Residues 1-20 form the signal peptide; the sequence is MKLCVAFLLVLVILPSVIGG. Positions 21-35 are excised as a propeptide; that stretch reads KPSERTLSGATRRGD. 4 disulfide bridges follow: cysteine 39–cysteine 53, cysteine 46–cysteine 58, cysteine 52–cysteine 63, and cysteine 57–cysteine 70.

The protein belongs to the conotoxin I1 superfamily. As to expression, expressed by the venom duct.

It is found in the secreted. The polypeptide is Conotoxin Bt11.1 (Conus betulinus (Beech cone)).